A 79-amino-acid polypeptide reads, in one-letter code: Large ribosomal subunit protein uL24 (79 aa).

This sequence belongs to the universal ribosomal protein uL24 family. Part of the 50S ribosomal subunit.

One of two assembly initiator proteins, it binds directly to the 5'-end of the 23S rRNA, where it nucleates assembly of the 50S subunit. In terms of biological role, one of the proteins that surrounds the polypeptide exit tunnel on the outside of the subunit. The polypeptide is Large ribosomal subunit protein uL24 (Lactobacillus delbrueckii subsp. bulgaricus (strain ATCC 11842 / DSM 20081 / BCRC 10696 / JCM 1002 / NBRC 13953 / NCIMB 11778 / NCTC 12712 / WDCM 00102 / Lb 14)).